An 892-amino-acid chain; its full sequence is Alpha-actinin-1 (892 aa).

Met-1 bears the N-acetylmethionine mark. The interval 1–247 is actin-binding; that stretch reads MDHYDSQQTN…IMTYVSSFYH (247 aa). Ser-6 carries the post-translational modification Phosphoserine. Phosphotyrosine; by FAK1 is present on Tyr-12. Calponin-homology (CH) domains lie at 31–135 and 144–250; these read KQQR…LRFA and TSAK…HAFS. N6-acetyllysine occurs at positions 95 and 195. Spectrin repeat units lie at residues 274–384, 394–499, 509–620, and 630–733; these read QLME…WLLN, HLAE…ALER, QLYL…ALTE, and RLRK…EVEN. An interaction with DDN region spans residues 274-733; sequence QLMEDYEKLA…IARTINEVEN (460 aa). A Phosphoserine modification is found at Ser-471. Lys-676 carries the N6-acetyllysine modification. A Phosphoserine modification is found at Ser-677. 2 EF-hand domains span residues 746–781 and 787–822; these read EQMNEFRASFNHFDRDHSGTLGPEEFKACLISLGYD and QGEAEFARIMSIVDPNRLGVVTFQAFIDFMSRETAD. Positions 759, 761, 763, 765, and 770 each coordinate Ca(2+). At Ser-890 the chain carries Phosphoserine.

It belongs to the alpha-actinin family. In terms of assembly, homodimer; antiparallel. Interacts with MYOZ2, TTID and LPP. Interacts with DDN. Interacts with PSD. Interacts with MICALL2. Interacts with DNM2 and CTTN. Interacts with PDLIM1. Interacts with PDLIM2. Interacts with PDLIM4 (via PDZ domain). Interacts with IGSF8.

Its subcellular location is the cytoplasm. It localises to the cytoskeleton. The protein localises to the myofibril. The protein resides in the sarcomere. It is found in the z line. Its subcellular location is the cell membrane. It localises to the cell junction. The protein localises to the cell projection. The protein resides in the ruffle. Functionally, F-actin cross-linking protein which is thought to anchor actin to a variety of intracellular structures. Association with IGSF8 regulates the immune synapse formation and is required for efficient T-cell activation. This Homo sapiens (Human) protein is Alpha-actinin-1 (ACTN1).